Reading from the N-terminus, the 373-residue chain is MAKRDYYEVLGVNKSASKDEIKKAYRKLSKKYHPDINKEEGADEKFKEISEAYEVLSDENKRVNYDQFGHDGPQGGFGSQGFGGSDFGGFEDIFSSFFGGGSRQRDPNAPRKGDDLQYTMTITFEEAVFGTKKEISIKKDVTCHTCNGDGAKPGTSKKTCSYCNGAGRVSVEQNTILGRVRTEQVCPKCEGSGQEFEEPCPTCKGKGTENKTVKLEVTVPEGVDNEQQVRLAGEGSPGVNGGPHGDLYVVFRVKPSNTFERDGDDIYYNLDISFSQAALGDEIKIPTLKSNVVLTIPAGTQTGKQFRLKDKGVKNVHGYGYGDLFVNIKVVTPTKLNDRQKELLKEFAEINGENINEQSSNFKDRAKRFFKGE.

Residues 5-69 (DYYEVLGVNK…NKRVNYDQFG (65 aa)) enclose the J domain. The CR-type zinc-finger motif lies at 130–212 (GTKKEISIKK…CKGKGTENKT (83 aa)). Residues C143, C146, C160, C163, C186, C189, C200, and C203 each contribute to the Zn(2+) site. 4 CXXCXGXG motif repeats span residues 143 to 150 (CHTCNGDG), 160 to 167 (CSYCNGAG), 186 to 193 (CPKCEGSG), and 200 to 207 (CPTCKGKG).

This sequence belongs to the DnaJ family. Homodimer. It depends on Zn(2+) as a cofactor.

It localises to the cytoplasm. Its function is as follows. Participates actively in the response to hyperosmotic and heat shock by preventing the aggregation of stress-denatured proteins and by disaggregating proteins, also in an autonomous, DnaK-independent fashion. Unfolded proteins bind initially to DnaJ; upon interaction with the DnaJ-bound protein, DnaK hydrolyzes its bound ATP, resulting in the formation of a stable complex. GrpE releases ADP from DnaK; ATP binding to DnaK triggers the release of the substrate protein, thus completing the reaction cycle. Several rounds of ATP-dependent interactions between DnaJ, DnaK and GrpE are required for fully efficient folding. Also involved, together with DnaK and GrpE, in the DNA replication of plasmids through activation of initiation proteins. This Staphylococcus epidermidis (strain ATCC 35984 / DSM 28319 / BCRC 17069 / CCUG 31568 / BM 3577 / RP62A) protein is Chaperone protein DnaJ.